The primary structure comprises 319 residues: Carbonic anhydrase 6 (319 aa).

An N-terminal signal peptide occupies residues 1–14; the sequence is MITLLFLLVVGAQA. The region spanning 16 to 273 is the Alpha-carbonic anhydrase domain; it reads HEWTYSEGVL…LNHRVVEANF (258 aa). Cysteine 37 and cysteine 219 are disulfide-bonded. N-linked (GlcNAc...) asparagine glycosylation occurs at asparagine 62. Histidine 80 acts as the Proton donor/acceptor in catalysis. Histidine 106, histidine 108, and histidine 133 together coordinate Zn(2+). 215 to 216 contributes to the substrate binding site; that stretch reads TT. Residue asparagine 251 is glycosylated (N-linked (GlcNAc...) asparagine).

It belongs to the alpha-carbonic anhydrase family. Zn(2+) serves as cofactor. Major constituent of saliva.

The protein resides in the secreted. It carries out the reaction hydrogencarbonate + H(+) = CO2 + H2O. Functionally, reversible hydration of carbon dioxide. Its role in saliva is unknown. This Bos taurus (Bovine) protein is Carbonic anhydrase 6 (CA6).